The primary structure comprises 468 residues: IQ domain-containing protein C (468 aa).

The IQ domain maps to 6-35; it reads LVLKVTALQACIRGFLVRRQFQSLRGEYEA. Disordered stretches follow at residues 113–157, 202–245, and 329–468; these read NASS…GPGL, EVNQ…PGEP, and SHKE…GPAG. Residues 139–150 are compositionally biased toward basic and acidic residues; the sequence is QETRDVSRKNDP. Residues 415-426 are compositionally biased toward basic and acidic residues; it reads SSIERSPSESSH.

The protein is IQ domain-containing protein C (IQCC) of Bos taurus (Bovine).